The sequence spans 126 residues: Plastocyanin (126 aa).

The N-terminal stretch at 1-28 (MSKKFLTILAGLLLVVSSFFLSVSPAAA) is a signal peptide. A Plastocyanin-like domain is found at 29-126 (ANATVKMGSD…AGMVGKVVVE (98 aa)). H67, C111, H114, and M119 together coordinate Cu cation.

The protein belongs to the plastocyanin family. The cofactor is Cu(2+).

Its subcellular location is the cellular thylakoid membrane. Its function is as follows. Participates in electron transfer between P700 and the cytochrome b6-f complex in photosystem I. The polypeptide is Plastocyanin (petE) (Synechocystis sp. (strain ATCC 27184 / PCC 6803 / Kazusa)).